The chain runs to 134 residues: Small ribosomal subunit protein uS9c (134 aa).

This sequence belongs to the universal ribosomal protein uS9 family.

It localises to the plastid. Its subcellular location is the chloroplast. The protein is Small ribosomal subunit protein uS9c (rps9) of Thalassiosira pseudonana (Marine diatom).